The chain runs to 647 residues: DEAD-box ATP-dependent RNA helicase 18 (647 aa).

The Q motif signature appears at Phe-23–Ala-51. The 179-residue stretch at Ile-54 to Val-232 folds into the Helicase ATP-binding domain. An ATP-binding site is contributed by Ala-67–Thr-74. The DEAD box signature appears at Asp-180–Asp-183. The Helicase C-terminal domain occupies Gln-274 to Ala-430. Positions Lys-507–Val-582 form a coiled coil. Positions Ala-512–Glu-545 are enriched in basic and acidic residues. Disordered stretches follow at residues Ala-512–Met-565 and Lys-590–Arg-647. Over residues Glu-596–Leu-610 the composition is skewed to acidic residues. Residues Lys-619–Ser-633 show a composition bias toward basic residues.

Belongs to the DEAD box helicase family. DDX55/SPB4 subfamily. As to quaternary structure, interacts with BRI1. In terms of processing, phosphorylated.

It catalyses the reaction ATP + H2O = ADP + phosphate + H(+). This chain is DEAD-box ATP-dependent RNA helicase 18, found in Oryza sativa subsp. japonica (Rice).